The sequence spans 243 residues: MTDIQDVISPKLAVAIANPIFPAVDSLLRSGRHISTEHLDNHAFLMDFQNELDGFYRRYNVELIRAPEGFFYLRPKATTLIARSVLSELEMLVGKVLCYLYLSPERLAQQGIFSTQEVYDELLNLADEGKLLKAVNQRSSGSDLDKQKLAEKVRAAIGRLRRLGMIQTVGEQNSGKFTISESVFRFGAEVRSGDDPLESQARLIRDGEAATPDSLALEKQAQLMENDTKSADEIDEEFDGEQE.

The interval 223–243 (LMENDTKSADEIDEEFDGEQE) is disordered. Positions 233 to 243 (EIDEEFDGEQE) are enriched in acidic residues.

The protein belongs to the MukE family. Interacts, and probably forms a ternary complex, with MukF and MukB. The complex formation is stimulated by calcium or magnesium.

It localises to the cytoplasm. The protein resides in the nucleoid. Functionally, involved in chromosome condensation, segregation and cell cycle progression. May participate in facilitating chromosome segregation by condensation DNA from both sides of a centrally located replisome during cell division. Probably acts via its interaction with MukB and MukF. The protein is Chromosome partition protein MukE of Haemophilus influenzae (strain ATCC 51907 / DSM 11121 / KW20 / Rd).